We begin with the raw amino-acid sequence, 400 residues long: Argininosuccinate synthase (400 aa).

ATP-binding positions include 10 to 18 (AYSGGVDTS) and Ala-38. Tyr-89 is a binding site for L-citrulline. Gly-119 serves as a coordination point for ATP. 3 residues coordinate L-aspartate: Thr-121, Asn-125, and Asp-126. Asn-125 is an L-citrulline binding site. Positions 129, 177, 186, 262, and 274 each coordinate L-citrulline.

It belongs to the argininosuccinate synthase family. Type 1 subfamily. Homotetramer.

The protein resides in the cytoplasm. The catalysed reaction is L-citrulline + L-aspartate + ATP = 2-(N(omega)-L-arginino)succinate + AMP + diphosphate + H(+). It participates in amino-acid biosynthesis; L-arginine biosynthesis; L-arginine from L-ornithine and carbamoyl phosphate: step 2/3. The polypeptide is Argininosuccinate synthase (Trichormus variabilis (strain ATCC 29413 / PCC 7937) (Anabaena variabilis)).